The following is a 285-amino-acid chain: Chromatin modification-related protein YNG2 (285 aa).

Disordered regions lie at residues 1 to 24 and 155 to 201; these read MSFE…SNLK and RTVA…GANF. Over residues 8-24 the composition is skewed to polar residues; it reads DPSSALEQATQDVSNLK. Positions 10 to 36 form a coiled coil; that stretch reads SSALEQATQDVSNLKSESRFLLEEIRA. A PHD-type zinc finger spans residues 224–273; the sequence is QLYCFCQSVSYGEMVACDGPNCKYEWFHYGCVNLDEPPKGQWYCPECRQE. Zn(2+) is bound by residues Cys-227, Cys-229, Cys-240, Cys-245, His-251, Cys-254, Cys-267, and Cys-270.

It belongs to the ING family. Interacts with H3K4me3 and to a lesser extent with H3K4me2. Component of the NuA4 histone acetyltransferase complex.

It is found in the nucleus. Its function is as follows. Component of the NuA4 histone acetyltransferase complex which is involved in transcriptional activation of selected genes principally by acetylation of nucleosomal histone H4 and H2A. The NuA4 complex is also involved in DNA repair. Involved in cell cycle progression and meiosis. The chain is Chromatin modification-related protein YNG2 (YNG2) from Eremothecium gossypii (strain ATCC 10895 / CBS 109.51 / FGSC 9923 / NRRL Y-1056) (Yeast).